The primary structure comprises 248 residues: Meiotically up-regulated gene 110 protein (248 aa).

Residues 23 to 43 form a helical membrane-spanning segment; sequence LRFVFWFSVLIPIFFIALIII.

The protein localises to the membrane. In terms of biological role, has a role in meiosis. This is Meiotically up-regulated gene 110 protein (mug110) from Schizosaccharomyces pombe (strain 972 / ATCC 24843) (Fission yeast).